Reading from the N-terminus, the 543-residue chain is CTP synthase (543 aa).

Residues 1–266 (MKTNYIFVTG…DDYICERFSL (266 aa)) form an amidoligase domain region. Residue serine 14 participates in CTP binding. Serine 14 is a UTP binding site. Residues 15–20 (SLGKGI) and aspartate 72 each bind ATP. 2 residues coordinate Mg(2+): aspartate 72 and glutamate 140. Residues 147–149 (DIE), 187–192 (KTKPTQ), and lysine 223 each bind CTP. Residues 187-192 (KTKPTQ) and lysine 223 each bind UTP. Position 239–241 (239–241 (KDV)) interacts with ATP. In terms of domain architecture, Glutamine amidotransferase type-1 spans 291–538 (TVGIVGKYID…IKAASEYQKK (248 aa)). Position 352 (glycine 352) interacts with L-glutamine. Cysteine 379 (nucleophile; for glutamine hydrolysis) is an active-site residue. L-glutamine contacts are provided by residues 380–383 (LGMQ), glutamate 403, and arginine 466. Active-site residues include histidine 511 and glutamate 513.

The protein belongs to the CTP synthase family. Homotetramer.

It catalyses the reaction UTP + L-glutamine + ATP + H2O = CTP + L-glutamate + ADP + phosphate + 2 H(+). The catalysed reaction is L-glutamine + H2O = L-glutamate + NH4(+). It carries out the reaction UTP + NH4(+) + ATP = CTP + ADP + phosphate + 2 H(+). It participates in pyrimidine metabolism; CTP biosynthesis via de novo pathway; CTP from UDP: step 2/2. Its activity is regulated as follows. Allosterically activated by GTP, when glutamine is the substrate; GTP has no effect on the reaction when ammonia is the substrate. The allosteric effector GTP functions by stabilizing the protein conformation that binds the tetrahedral intermediate(s) formed during glutamine hydrolysis. Inhibited by the product CTP, via allosteric rather than competitive inhibition. Functionally, catalyzes the ATP-dependent amination of UTP to CTP with either L-glutamine or ammonia as the source of nitrogen. Regulates intracellular CTP levels through interactions with the four ribonucleotide triphosphates. The protein is CTP synthase of Baumannia cicadellinicola subsp. Homalodisca coagulata.